We begin with the raw amino-acid sequence, 372 residues long: NAD(P)H-quinone oxidoreductase subunit 1 (372 aa).

The next 8 helical transmembrane spans lie at 27 to 47 (IIWL…GVLV), 97 to 117 (ILFT…WLIV), 128 to 148 (VGIG…GLLM), 176 to 196 (LALS…IDIV), 204 to 224 (ILSW…ICAL), 266 to 286 (ILSA…PIPV), 308 to 328 (SIGI…AILL), and 347 to 367 (FLLP…LAFP).

It belongs to the complex I subunit 1 family. In terms of assembly, NDH-1 is composed of at least 11 different subunits.

The protein localises to the cellular thylakoid membrane. It carries out the reaction a plastoquinone + NADH + (n+1) H(+)(in) = a plastoquinol + NAD(+) + n H(+)(out). The catalysed reaction is a plastoquinone + NADPH + (n+1) H(+)(in) = a plastoquinol + NADP(+) + n H(+)(out). In terms of biological role, NDH-1 shuttles electrons from an unknown electron donor, via FMN and iron-sulfur (Fe-S) centers, to quinones in the respiratory and/or the photosynthetic chain. The immediate electron acceptor for the enzyme in this species is believed to be plastoquinone. Couples the redox reaction to proton translocation, and thus conserves the redox energy in a proton gradient. This chain is NAD(P)H-quinone oxidoreductase subunit 1, found in Prochlorococcus marinus (strain MIT 9312).